The primary structure comprises 135 residues: Membrane-anchored ubiquitin-fold protein 4 (135 aa).

The tract at residues methionine 1–aspartate 20 is disordered. Residues valine 23–alanine 92 form the Ubiquitin-like domain. Cysteine 132 carries the post-translational modification Cysteine methyl ester. Cysteine 132 carries S-geranylgeranyl cysteine lipidation. Residues threonine 133–leucine 135 constitute a propeptide, removed in mature form.

The protein resides in the cell membrane. Its function is as follows. May serve as docking site to facilitate the association of other proteins to the plasma membrane. The sequence is that of Membrane-anchored ubiquitin-fold protein 4 (MUB4) from Oryza sativa subsp. japonica (Rice).